A 225-amino-acid polypeptide reads, in one-letter code: UPF0173 metal-dependent hydrolase Aflv_0488 (225 aa).

Belongs to the UPF0173 family.

In Anoxybacillus flavithermus (strain DSM 21510 / WK1), this protein is UPF0173 metal-dependent hydrolase Aflv_0488.